Here is a 941-residue protein sequence, read N- to C-terminus: Zinc finger protein su(Hw) (941 aa).

2 disordered regions span residues 1–97 (MSAS…APAA) and 176–211 (ENNN…NSSQ). Low complexity predominate over residues 47–57 (STTTTTSRTPS). The span at 185–202 (VTEDDEDLGEDGDEDGED) shows a compositional bias: acidic residues. T186 is subject to Phosphothreonine. Residues 220 to 242 (HVCGKCYKTFRRVQSLKKHLEFC) form a C2H2-type 1; atypical zinc finger. The C2H2-type 2 zinc finger occupies 290 to 313 (INCPDCPKSFKTQTSYERHIFITH). The segment at 319 to 341 (FPCSICNANLRSEALLALHEEQH) adopts a C2H2-type 3; atypical zinc-finger fold. C2H2-type zinc fingers lie at residues 348-366 (YACK…LKRH), 380-402 (MSCK…LKQH), 413-435 (YMCH…IRTH), 441-463 (FDCD…RRYH), 469-491 (YSCT…MKRH), 497-519 (HKCD…SKTH), 523-545 (FPCE…VKTH), 553-577 (FSCA…EGKH), and 596-619 (TDCA…RTVH). The segment at 760–860 (ILTEEDIKLK…PIDDVIEYVL (101 aa)) is interaction with mod(mdg4). Residues 864 to 941 (DQDEGGLDKD…KKPVGEQEKA (78 aa)) are disordered. Composition is skewed to basic and acidic residues over residues 869–880 (GLDKDNESHSGD) and 891–941 (KTNE…QEKA).

As to quaternary structure, component of the gypsy chromatin insulator complex, composed of Cp190, mod(mdg4) and su(Hw). The gypsy chromatin insulator complex interacts with Topors via mod(mdg4) and su(Hw). Upon ecdysone stimulation, interacts with Nup98.

It is found in the nucleus. It localises to the chromosome. Functionally, component of the gypsy chromatin insulator complex which is required for the function of the gypsy chromatin insulator and other endogenous chromatin insulators. Chromatin insulators are regulatory elements which establish independent domains of transcriptional activity within eukaryotic genomes. Insulators have two defining properties; they can block the communication between an enhancer and a promoter when placed between them and can also buffer transgenes from position effect variegation (PEV). Insulators are proposed to structure the chromatin fiber into independent domains of differing transcriptional potential by promoting the formation of distinct chromatin loops. This chromatin looping may involve the formation of insulator bodies, where homotypic interactions between individual subunits of the insulator complex could promote the clustering of widely spaced insulators at the nuclear periphery. Within the gypsy insulator complex, this protein binds specifically to a region of the gypsy element located 3' of the 5' long terminal repeat (LTR), and may also mediate interaction with other endogenous insulators at sites distinct from those recognized by Cp190. Cooperates with pita and cliff to recruit Cp190 and regulate insulator function at the front-ultraabdominal (Fub) boundary. The chain is Zinc finger protein su(Hw) from Drosophila melanogaster (Fruit fly).